The sequence spans 149 residues: Probable flagellum biosynthesis repressor protein FlbT (149 aa).

This sequence belongs to the FlbT family.

In terms of biological role, has a post-transcriptional repressor function in flagellum biogenesis. Associates with the 5'-UTR of fljK mRNA and promotes its degradation. The chain is Probable flagellum biosynthesis repressor protein FlbT from Allorhizobium ampelinum (strain ATCC BAA-846 / DSM 112012 / S4) (Agrobacterium vitis (strain S4)).